A 477-amino-acid polypeptide reads, in one-letter code: Tyrosine--tRNA ligase, mitochondrial (477 aa).

Residues 1-16 (MAAPILRSFSWGRWSG) constitute a mitochondrion transit peptide. Position 77 (Y77) interacts with L-tyrosine. D81 is a binding site for ATP. The short motif at 82-91 (PTADSLHVGH) is the 'HIGH' region element. Positions 121, 221, 225, and 228 each coordinate L-tyrosine. 244–246 (GSD) is a binding site for ATP. L-tyrosine is bound at residue Q247. ATP is bound by residues I274 and K284. The 'KMSKS' region motif lies at 281–285 (KLGKS). N6-acetyllysine occurs at positions 355 and 367.

It belongs to the class-I aminoacyl-tRNA synthetase family. Homodimer.

It is found in the mitochondrion matrix. The enzyme catalyses tRNA(Tyr) + L-tyrosine + ATP = L-tyrosyl-tRNA(Tyr) + AMP + diphosphate + H(+). Functionally, catalyzes the attachment of tyrosine to tRNA(Tyr) in a two-step reaction: tyrosine is first activated by ATP to form Tyr-AMP and then transferred to the acceptor end of tRNA(Tyr). This chain is Tyrosine--tRNA ligase, mitochondrial (YARS2), found in Homo sapiens (Human).